The primary structure comprises 590 residues: Probable metalloendopeptidase G1-type (590 aa).

Position 41 (histidine 41) interacts with Zn(2+). Glutamate 44 is an active-site residue. Histidine 45 is a binding site for Zn(2+).

It belongs to the peptidase M44 family. Requires Zn(2+) as cofactor.

In terms of biological role, seems to be involved in viral proteins maturation by cleavage at Ala-Gly-|-Xaa motifs. This chain is Probable metalloendopeptidase G1-type, found in Oryctolagus cuniculus (Rabbit).